Consider the following 332-residue polypeptide: Probable class II chitinase ARB_00204 (332 aa).

The signal sequence occupies residues Met1–Ala18. In terms of domain architecture, GH18 spans Asp19–Phe331. Glu118 functions as the Proton donor in the catalytic mechanism. An N-linked (GlcNAc...) asparagine glycan is attached at Asn245.

The protein belongs to the glycosyl hydrolase 18 family. Chitinase class II subfamily.

It localises to the secreted. It catalyses the reaction Random endo-hydrolysis of N-acetyl-beta-D-glucosaminide (1-&gt;4)-beta-linkages in chitin and chitodextrins.. Its function is as follows. Degrades chitin and chitotriose. In Arthroderma benhamiae (strain ATCC MYA-4681 / CBS 112371) (Trichophyton mentagrophytes), this protein is Probable class II chitinase ARB_00204.